A 179-amino-acid polypeptide reads, in one-letter code: Peptidyl-tRNA hydrolase 2, mitochondrial (179 aa).

The helical transmembrane segment at 15 to 37 threads the bilayer; sequence STLGLAVGVACGMCLGWSLRVCF. Residues K47, K76, K81, K95, K106, K115, K171, and K177 each participate in a glycyl lysine isopeptide (Lys-Gly) (interchain with G-Cter in ubiquitin) cross-link.

Belongs to the PTH2 family. As to quaternary structure, monomer. In terms of processing, ubiquitinated by PRKN during mitophagy, leading to its degradation and enhancement of mitophagy. Deubiquitinated by USP30.

The protein localises to the mitochondrion outer membrane. It catalyses the reaction an N-acyl-L-alpha-aminoacyl-tRNA + H2O = an N-acyl-L-amino acid + a tRNA + H(+). Its function is as follows. Peptidyl-tRNA hydrolase which releases tRNAs from the ribosome during protein synthesis. Promotes caspase-independent apoptosis by regulating the function of two transcriptional regulators, AES and TLE1. The polypeptide is Peptidyl-tRNA hydrolase 2, mitochondrial (PTRH2) (Homo sapiens (Human)).